A 260-amino-acid chain; its full sequence is Cobalt transport protein CbiM (260 aa).

A signal peptide spans 1–34 (MKLGESMKKNATLSVKIIAFLGVLIFTVMPVANA). A run of 6 helical transmembrane segments spans residues 39-59 (EGYLSPKWCIIWGILVLPFLI), 77-97 (LLFAMAGAFIFILSALKLPSF), 109-129 (LSTILFGPAITTVLGVIVLLF), 132-152 (LLLAHGGISTLGANSFAMAVM), 175-195 (IFFSATVGDLFTYCITAIQLG), and 215-235 (VFAITQIPIAIAEGILTVLIF).

This sequence belongs to the CbiM family. Forms an energy-coupling factor (ECF) transporter complex composed of an ATP-binding protein (A component, CbiO), a transmembrane protein (T component, CbiQ) and 2 possible substrate-capture proteins (S components, CbiM and CbiN) of unknown stoichimetry.

The protein localises to the cell membrane. It functions in the pathway cofactor biosynthesis; adenosylcobalamin biosynthesis. Its function is as follows. Part of the energy-coupling factor (ECF) transporter complex CbiMNOQ involved in cobalt import. This chain is Cobalt transport protein CbiM, found in Clostridium cellulovorans (strain ATCC 35296 / DSM 3052 / OCM 3 / 743B).